A 162-amino-acid polypeptide reads, in one-letter code: Phosphopantetheine adenylyltransferase (162 aa).

Substrate is bound at residue Ser-9. Residues 9 to 10 and His-17 contribute to the ATP site; that span reads SF. Substrate contacts are provided by Lys-41, Val-77, and Lys-91. ATP is bound by residues 92–94, Glu-102, and 126–132; these read GLR and YAFLSSS.

Belongs to the bacterial CoaD family. Homohexamer. Mg(2+) is required as a cofactor.

It localises to the cytoplasm. The enzyme catalyses (R)-4'-phosphopantetheine + ATP + H(+) = 3'-dephospho-CoA + diphosphate. The protein operates within cofactor biosynthesis; coenzyme A biosynthesis; CoA from (R)-pantothenate: step 4/5. Functionally, reversibly transfers an adenylyl group from ATP to 4'-phosphopantetheine, yielding dephospho-CoA (dPCoA) and pyrophosphate. This chain is Phosphopantetheine adenylyltransferase, found in Frankia alni (strain DSM 45986 / CECT 9034 / ACN14a).